Reading from the N-terminus, the 448-residue chain is Phosphoglucosamine mutase (448 aa).

Catalysis depends on S100, which acts as the Phosphoserine intermediate. Mg(2+) is bound by residues S100, D240, D242, and D244. The residue at position 100 (S100) is a Phosphoserine.

The protein belongs to the phosphohexose mutase family. The cofactor is Mg(2+). Activated by phosphorylation.

The catalysed reaction is alpha-D-glucosamine 1-phosphate = D-glucosamine 6-phosphate. Functionally, catalyzes the conversion of glucosamine-6-phosphate to glucosamine-1-phosphate. This Clostridioides difficile (strain 630) (Peptoclostridium difficile) protein is Phosphoglucosamine mutase.